The sequence spans 99 residues: Beta-defensin 127 (99 aa).

A signal peptide spans 1 to 20; it reads MGLFMIIAILLFQKPTVTEQ. 3 disulfide bridges follow: cysteine 24–cysteine 53, cysteine 33–cysteine 47, and cysteine 37–cysteine 54. A propeptide spanning residues 66-99 is cleaved from the precursor; sequence ITKPSHPKPATLALTLQDYVTIIENFPSLKTQST.

This sequence belongs to the beta-defensin family.

It localises to the secreted. Has antibacterial activity. The polypeptide is Beta-defensin 127 (DEFB127) (Pan troglodytes (Chimpanzee)).